We begin with the raw amino-acid sequence, 173 residues long: Insertion element IS1397 uncharacterized 20.1 kDa protein (173 aa).

The segment at Lys115–Met135 is disordered.

The protein belongs to the IS150/IS1296 orfA family.

The protein is Insertion element IS1397 uncharacterized 20.1 kDa protein of Escherichia coli.